Consider the following 379-residue polypeptide: Queuine tRNA-ribosyltransferase (379 aa).

Asp94 acts as the Proton acceptor in catalysis. Residues 94–98 (DSGGF), Asp148, Gln191, and Gly218 each bind substrate. An RNA binding region spans residues 249-255 (GVGSPDA). The Nucleophile role is filled by Asp268. The RNA binding; important for wobble base 34 recognition stretch occupies residues 273 to 277 (TRIAR). Residues Cys306, Cys308, Cys311, and His337 each coordinate Zn(2+).

The protein belongs to the queuine tRNA-ribosyltransferase family. As to quaternary structure, homodimer. Within each dimer, one monomer is responsible for RNA recognition and catalysis, while the other monomer binds to the replacement base PreQ1. Zn(2+) is required as a cofactor.

The catalysed reaction is 7-aminomethyl-7-carbaguanine + guanosine(34) in tRNA = 7-aminomethyl-7-carbaguanosine(34) in tRNA + guanine. It functions in the pathway tRNA modification; tRNA-queuosine biosynthesis. In terms of biological role, catalyzes the base-exchange of a guanine (G) residue with the queuine precursor 7-aminomethyl-7-deazaguanine (PreQ1) at position 34 (anticodon wobble position) in tRNAs with GU(N) anticodons (tRNA-Asp, -Asn, -His and -Tyr). Catalysis occurs through a double-displacement mechanism. The nucleophile active site attacks the C1' of nucleotide 34 to detach the guanine base from the RNA, forming a covalent enzyme-RNA intermediate. The proton acceptor active site deprotonates the incoming PreQ1, allowing a nucleophilic attack on the C1' of the ribose to form the product. After dissociation, two additional enzymatic reactions on the tRNA convert PreQ1 to queuine (Q), resulting in the hypermodified nucleoside queuosine (7-(((4,5-cis-dihydroxy-2-cyclopenten-1-yl)amino)methyl)-7-deazaguanosine). This Staphylococcus aureus (strain bovine RF122 / ET3-1) protein is Queuine tRNA-ribosyltransferase.